A 296-amino-acid chain; its full sequence is Glycine--tRNA ligase alpha subunit (296 aa).

This sequence belongs to the class-II aminoacyl-tRNA synthetase family. Tetramer of two alpha and two beta subunits.

Its subcellular location is the cytoplasm. It catalyses the reaction tRNA(Gly) + glycine + ATP = glycyl-tRNA(Gly) + AMP + diphosphate. The protein is Glycine--tRNA ligase alpha subunit of Francisella philomiragia subsp. philomiragia (strain ATCC 25017 / CCUG 19701 / FSC 153 / O#319-036).